Here is a 337-residue protein sequence, read N- to C-terminus: DNA-directed RNA polymerase subunit alpha (337 aa).

The interval 1–233 (MIREKVTVST…DLFIPFLHME (233 aa)) is alpha N-terminal domain (alpha-NTD). Residues 266–337 (KLALKSIFID…FAIDLPKNQF (72 aa)) form an alpha C-terminal domain (alpha-CTD) region.

It belongs to the RNA polymerase alpha chain family. As to quaternary structure, in plastids the minimal PEP RNA polymerase catalytic core is composed of four subunits: alpha, beta, beta', and beta''. When a (nuclear-encoded) sigma factor is associated with the core the holoenzyme is formed, which can initiate transcription.

It localises to the plastid. The protein resides in the chloroplast. It catalyses the reaction RNA(n) + a ribonucleoside 5'-triphosphate = RNA(n+1) + diphosphate. Its function is as follows. DNA-dependent RNA polymerase catalyzes the transcription of DNA into RNA using the four ribonucleoside triphosphates as substrates. This is DNA-directed RNA polymerase subunit alpha from Ipomoea purpurea (Common morning glory).